The chain runs to 473 residues: Adenosylhomocysteinase (473 aa).

Thr-64, Asp-139, and Glu-199 together coordinate substrate. Position 200-202 (200-202 (TTT)) interacts with NAD(+). Substrate is bound by residues Lys-229 and Asp-233. Residues Asn-234, 263-268 (GYGDVG), Glu-286, Asn-321, 342-344 (IGH), and Asn-387 each bind NAD(+).

The protein belongs to the adenosylhomocysteinase family. NAD(+) is required as a cofactor.

Its subcellular location is the cytoplasm. The catalysed reaction is S-adenosyl-L-homocysteine + H2O = L-homocysteine + adenosine. Its pathway is amino-acid biosynthesis; L-homocysteine biosynthesis; L-homocysteine from S-adenosyl-L-homocysteine: step 1/1. In terms of biological role, may play a key role in the regulation of the intracellular concentration of adenosylhomocysteine. The chain is Adenosylhomocysteinase from Paraburkholderia phytofirmans (strain DSM 17436 / LMG 22146 / PsJN) (Burkholderia phytofirmans).